The sequence spans 360 residues: Mannonate dehydratase (360 aa).

It belongs to the mannonate dehydratase family. Requires Fe(2+) as cofactor. Mn(2+) is required as a cofactor.

The catalysed reaction is D-mannonate = 2-dehydro-3-deoxy-D-gluconate + H2O. It participates in carbohydrate metabolism; pentose and glucuronate interconversion. Catalyzes the dehydration of D-mannonate. The sequence is that of Mannonate dehydratase (uxuA) from Thermotoga neapolitana.